We begin with the raw amino-acid sequence, 69 residues long: UPF0437 protein AZC_3451 (69 aa).

Belongs to the UPF0437 family.

The chain is UPF0437 protein AZC_3451 from Azorhizobium caulinodans (strain ATCC 43989 / DSM 5975 / JCM 20966 / LMG 6465 / NBRC 14845 / NCIMB 13405 / ORS 571).